The chain runs to 73 residues: UPF0346 protein Lreu_0775 (73 aa).

The protein belongs to the UPF0346 family.

The chain is UPF0346 protein Lreu_0775 from Limosilactobacillus reuteri (strain DSM 20016) (Lactobacillus reuteri).